The chain runs to 136 residues: Large ribosomal subunit protein uL16c (136 aa).

This sequence belongs to the universal ribosomal protein uL16 family. As to quaternary structure, part of the 50S ribosomal subunit.

Its subcellular location is the plastid. It is found in the chloroplast. This is Large ribosomal subunit protein uL16c from Saccharum hybrid (Sugarcane).